The primary structure comprises 336 residues: Iron(3+)-hydroxamate import system permease protein FhuG (336 aa).

9 helical membrane passes run 9–29 (LIVM…SLNL), 63–83 (IILS…LQSV), 91–111 (PGIL…IYFF), 124–144 (FMLP…IYIL), 155–175 (LILV…IFQL), 193–213 (IWGA…ILLL), 245–265 (ILLL…GGIA), 285–305 (TLIP…DTLA), and 313–333 (EIPV…YLLM).

It belongs to the binding-protein-dependent transport system permease family. FecCD subfamily. In terms of assembly, the complex is composed of an ATP-binding protein (FhuC), two transmembrane proteins (FhuB and FhuG) and a solute-binding protein (FhuD or YxeB).

It localises to the cell membrane. Its function is as follows. Part of the ABC transporter complex FhuBGCD involved in iron(3+)-hydroxamate import. Responsible for the translocation of the substrate across the membrane. This chain is Iron(3+)-hydroxamate import system permease protein FhuG (fhuG), found in Bacillus subtilis (strain 168).